The primary structure comprises 104 residues: L-rhamnose mutarotase (104 aa).

A substrate-binding site is contributed by Tyr18. Residue His22 is the Proton donor of the active site. Substrate is bound by residues Tyr41 and Trp76–Trp77.

Belongs to the rhamnose mutarotase family. As to quaternary structure, homodimer.

Its subcellular location is the cytoplasm. It catalyses the reaction alpha-L-rhamnose = beta-L-rhamnose. Its pathway is carbohydrate metabolism; L-rhamnose metabolism. Involved in the anomeric conversion of L-rhamnose. The protein is L-rhamnose mutarotase of Phocaeicola vulgatus (strain ATCC 8482 / DSM 1447 / JCM 5826 / CCUG 4940 / NBRC 14291 / NCTC 11154) (Bacteroides vulgatus).